Reading from the N-terminus, the 173-residue chain is Translation initiation factor IF-3 (173 aa).

Belongs to the IF-3 family. In terms of assembly, monomer.

The protein localises to the cytoplasm. Functionally, IF-3 binds to the 30S ribosomal subunit and shifts the equilibrium between 70S ribosomes and their 50S and 30S subunits in favor of the free subunits, thus enhancing the availability of 30S subunits on which protein synthesis initiation begins. The sequence is that of Translation initiation factor IF-3 from Bartonella bacilliformis (strain ATCC 35685 / KC583 / Herrer 020/F12,63).